The primary structure comprises 154 residues: Cyanate hydratase (154 aa).

Active-site residues include Arg-100, Glu-103, and Ser-126.

The protein belongs to the cyanase family.

It catalyses the reaction cyanate + hydrogencarbonate + 3 H(+) = NH4(+) + 2 CO2. Its function is as follows. Catalyzes the reaction of cyanate with bicarbonate to produce ammonia and carbon dioxide. In Aspergillus fumigatus (strain ATCC MYA-4609 / CBS 101355 / FGSC A1100 / Af293) (Neosartorya fumigata), this protein is Cyanate hydratase.